A 411-amino-acid chain; its full sequence is Serine/threonine transporter SstT (411 aa).

8 helical membrane-spanning segments follow: residues 17–37 (IMVG…TASA), 41–61 (LGAL…LVLV), 79–99 (ILFL…VVSF), 138–158 (ALIS…GLAL), 189–209 (LGIF…ALWG), 214–234 (LVVL…LIVF), 295–315 (MAGA…TLGI), and 327–347 (VVAA…LLLI).

Belongs to the dicarboxylate/amino acid:cation symporter (DAACS) (TC 2.A.23) family.

Its subcellular location is the cell inner membrane. It catalyses the reaction L-serine(in) + Na(+)(in) = L-serine(out) + Na(+)(out). The catalysed reaction is L-threonine(in) + Na(+)(in) = L-threonine(out) + Na(+)(out). Its function is as follows. Involved in the import of serine and threonine into the cell, with the concomitant import of sodium (symport system). The sequence is that of Serine/threonine transporter SstT from Serratia proteamaculans (strain 568).